A 30-amino-acid polypeptide reads, in one-letter code: Babycurus-toxin 1 (30 aa).

The 29-residue stretch at 2–30 (KDGYPTNSKGCKISGCLPGENKFCLNECQ) folds into the LCN-type CS-alpha/beta domain.

This sequence belongs to the long (4 C-C) scorpion toxin superfamily. Sodium channel inhibitor family. In terms of tissue distribution, expressed by the venom gland.

The protein localises to the secreted. Binds to sodium channels (Nav) and inhibits both the activation and inactivation of the activated channels, thereby blocking neuronal transmission. The protein is Babycurus-toxin 1 of Babycurus centrurimorphus (East African scorpion).